The primary structure comprises 620 residues: MNLKNGLLLFILFLDCVFFKVESKCVKGCDVALASYYIIPSIQLRNISNFMQSKIVLTNSFDVIMSYNRDVVFDKSGLISYTRINVPFPCECIGGEFLGHVFEYTTKEGDDYDLIANTYYASLTTVELLKKFNSYDPNHIPVKAKINVTVICSCGNSQISKDYGLFVTYPLRSDDTLAKIATKAGLDEGLIQNFNQDANFSIGSGIVFIPGRDQNGHFFPLYSRTGIAKGSAVGIAMAGIFGLLLFVIYIYAKYFQKKEEEKTKLPQTSRAFSTQDASGSAEYETSGSSGHATGSAAGLTGIMVAKSTEFTYQELAKATNNFSLDNKIGQGGFGAVYYAELRGEKTAIKKMDVQASSEFLCELKVLTHVHHLNLVRLIGYCVEGSLFLVYEHIDNGNLGQYLHGIGTEPLPWSSRVQIALDSARGLEYIHEHTVPVYIHRDVKSANILIDKNLRGKVADFGLTKLIEVGNSTLHTRLVGTFGYMPPEYAQYGDVSPKIDVYAFGVVLYELITAKNAVLKTGESVAESKGLVQLFEEALHRMDPLEGLRKLVDPRLKENYPIDSVLKMAQLGRACTRDNPLLRPSMRSIVVALMTLSSPTEDCDDDSSYENQSLINLLSTR.

An N-terminal signal peptide occupies residues 1–23; the sequence is MNLKNGLLLFILFLDCVFFKVES. The Extracellular portion of the chain corresponds to 24–231; that stretch reads KCVKGCDVAL…YSRTGIAKGS (208 aa). Cystine bridges form between Cys-25–Cys-92, Cys-29–Cys-154, and Cys-90–Cys-152. N-linked (GlcNAc...) asparagine glycosylation occurs at Asn-46. The LysM 1; degenerate domain occupies 46-72; it reads NISNFMQSKIVLTNSFDVIMSYNRDVV. LysM domains lie at 102-148 and 167-210; these read FEYT…KINV and VTYP…VFIP. Residues 108–114 and 136–142 contribute to the chitin site; these read EGDDYDL and DPNHIPV. Residues Asn-147 and Asn-199 are each glycosylated (N-linked (GlcNAc...) asparagine). A helical transmembrane segment spans residues 232–252; that stretch reads AVGIAMAGIFGLLLFVIYIYA. The Cytoplasmic portion of the chain corresponds to 253–620; it reads KYFQKKEEEK…QSLINLLSTR (368 aa). The segment covering 265–278 has biased composition (polar residues); that stretch reads LPQTSRAFSTQDAS. Residues 265-292 are disordered; that stretch reads LPQTSRAFSTQDASGSAEYETSGSSGHA. A phosphoserine mark is found at Ser-269 and Ser-273. One can recognise a Protein kinase domain in the interval 322 to 595; the sequence is FSLDNKIGQG…RSIVVALMTL (274 aa). ATP is bound by residues 328–336 and Lys-349; that span reads IGQGGFGAV. Asp-441 functions as the Proton acceptor in the catalytic mechanism.

The protein belongs to the protein kinase superfamily. Ser/Thr protein kinase family. As to quaternary structure, forms homodimers and homooligomers. Forms heteromeric complexes with NFP at the cell periphery in nodules. Interacts with PUB1. Autophosphorylated. Expressed in the epidermal and root hair cells of the developing root hair zone during nonsymbiotic growth. Accumulates in roots and nodules during symbiotic growth with rhizobia. Localized at the cell periphery in a narrow zone of about two cell layers (e.g. L1/L2 zone) at the nodule apex upon infection by rhizobia, from the meristem to the infection zone (at protein level).

It is found in the cell membrane. The protein localises to the vacuole lumen. It carries out the reaction L-seryl-[protein] + ATP = O-phospho-L-seryl-[protein] + ADP + H(+). It catalyses the reaction L-threonyl-[protein] + ATP = O-phospho-L-threonyl-[protein] + ADP + H(+). Putative receptor for S.meliloti Nod factor signals essential for the establishment of the nitrogen-fixing, root nodule symbiosis with S.meliloti. Involved in the control of root hair curling after S.meliloti infection, probably by modulating the reorganization of the microtubular cytoskeleton in epidermal and cortical cells. Regulates a subset of Nod factor-induced genes. This is LysM domain receptor-like kinase 3 from Medicago truncatula (Barrel medic).